The sequence spans 116 residues: Protein TRACHEARY ELEMENT DIFFERENTIATION-RELATED 6 (116 aa).

Topologically, residues 1 to 24 (MASTDSVYRPTPTPDHDTTVVVVV) are extracellular. A helical membrane pass occupies residues 25–45 (FVSLGCVMFLAFLAFVIWFLI). The Cytoplasmic portion of the chain corresponds to 46–116 (KKRSRKHRER…GVGSSVVSRS (71 aa)).

Interacts with CESA7/IRX3, a subunit of the secondary cell wall (SCW)-related cellulose synthase complex. As to expression, expressed preferentially in differentiating vessel elements in seedlings.

It is found in the cell membrane. Its subcellular location is the secreted. It localises to the cell wall. In terms of biological role, involved in the secondary cell wall (SCW) formation of vessel elements (e.g. protoxylem and metaxylem), thus promoting tracheary element (TE) differentiation. This Arabidopsis thaliana (Mouse-ear cress) protein is Protein TRACHEARY ELEMENT DIFFERENTIATION-RELATED 6.